The chain runs to 246 residues: MSDQILGVIPARFASTRFPGKPLALIGTKPMIQWTYHHASLSKSFHRLVVATDDKRIHDVVLGFGGESVLTSPDHPTGTDRIIEVAETYPNYGIIVNIQGDEPGMEASLIDGVVGLKTKHRNWEMTTAAVPFTSAEDPKDPNKVKVVFDNKGRANYFSRSPIPASFKGEAKYHRHLGIYAYERDFLMNYNQLPPSDWETVESLEQLRALQNGSTIGVYLSDKANLGVDSPADLEVVITEFKKKGLL.

Belongs to the KdsB family.

It is found in the cytoplasm. It catalyses the reaction 3-deoxy-alpha-D-manno-oct-2-ulosonate + CTP = CMP-3-deoxy-beta-D-manno-octulosonate + diphosphate. It participates in nucleotide-sugar biosynthesis; CMP-3-deoxy-D-manno-octulosonate biosynthesis; CMP-3-deoxy-D-manno-octulosonate from 3-deoxy-D-manno-octulosonate and CTP: step 1/1. Its pathway is bacterial outer membrane biogenesis; lipopolysaccharide biosynthesis. In terms of biological role, activates KDO (a required 8-carbon sugar) for incorporation into bacterial lipopolysaccharide in Gram-negative bacteria. This is 3-deoxy-manno-octulosonate cytidylyltransferase from Leptospira biflexa serovar Patoc (strain Patoc 1 / Ames).